A 294-amino-acid polypeptide reads, in one-letter code: tRNA dimethylallyltransferase (294 aa).

Gly10–Thr17 contributes to the ATP binding site. Thr12–Thr17 is a binding site for substrate. Residues Asp35 to Gln38 form an interaction with substrate tRNA region.

This sequence belongs to the IPP transferase family. In terms of assembly, monomer. Requires Mg(2+) as cofactor.

It catalyses the reaction adenosine(37) in tRNA + dimethylallyl diphosphate = N(6)-dimethylallyladenosine(37) in tRNA + diphosphate. Its function is as follows. Catalyzes the transfer of a dimethylallyl group onto the adenine at position 37 in tRNAs that read codons beginning with uridine, leading to the formation of N6-(dimethylallyl)adenosine (i(6)A). The chain is tRNA dimethylallyltransferase from Streptococcus pneumoniae serotype 4 (strain ATCC BAA-334 / TIGR4).